Consider the following 80-residue polypeptide: MAGGPRRGGRRRKKVCYFTANGITHIDYKDTELLKRFISERGKILPRRVTGTSAKYQRMLTTAIKRARHMALLPYVKEEQ.

This sequence belongs to the bacterial ribosomal protein bS18 family. As to quaternary structure, part of the 30S ribosomal subunit. Forms a tight heterodimer with protein bS6.

In terms of biological role, binds as a heterodimer with protein bS6 to the central domain of the 16S rRNA, where it helps stabilize the platform of the 30S subunit. This chain is Small ribosomal subunit protein bS18, found in Staphylococcus epidermidis (strain ATCC 35984 / DSM 28319 / BCRC 17069 / CCUG 31568 / BM 3577 / RP62A).